Here is a 384-residue protein sequence, read N- to C-terminus: Alpha-2B adrenergic receptor (384 aa).

Residues 1–25 (AIAAVTTFLILFTVFGNALVILAVL) traverse the membrane as a helical segment. At 26–36 (TSRSLRAPQNL) the chain is on the cytoplasmic side. A helical membrane pass occupies residues 37–62 (FLVSLAAADILVATLIXPFSLANELL). Over 63–72 (GYWYFWHTWC) the chain is Extracellular. C72 and C151 are oxidised to a cystine. Residues 73–95 (EVYLALXVLXCTSSIVHLCAISL) form a helical membrane-spanning segment. The Cytoplasmic segment spans residues 96–117 (DRYWAVSRALEYNSKRTPRRIX). The chain crosses the membrane as a helical span at residues 118–140 (GIILTVWLIAAAISLPPLIYKGD). The Extracellular segment spans residues 141–156 (QGPQPHGRPQCRLNQE). A helical transmembrane segment spans residues 157–180 (AWYILSSSIGSFFAPCLIMILVYL). Topologically, residues 181-348 (RIYLIAKRRN…LTREKRFTFV (168 aa)) are cytoplasmic. Positions 193–306 (GPRAQGASKG…SXGSPQLQQP (114 aa)) are disordered. Low complexity predominate over residues 288 to 306 (PEALPASPASXGSPQLQQP). The helical transmembrane segment at 349–372 (LAVVIGVXVLCWFPFFXSYSLGAI) threads the bilayer. Residues 373–381 (CPQHCTVXH) are Extracellular-facing. A helical transmembrane segment spans residues 382-384 (GLF).

The protein belongs to the G-protein coupled receptor 1 family. Adrenergic receptor subfamily. ADRA2B sub-subfamily. In terms of assembly, interacts with RAB26. Interacts with PPP1R9B. Interacts with GGA1, GGA2 and GGA3.

Its subcellular location is the cell membrane. Alpha-2 adrenergic receptors mediate the catecholamine-induced inhibition of adenylate cyclase through the action of G proteins. The protein is Alpha-2B adrenergic receptor (ADRA2B) of Echinops telfairi (Lesser hedgehog tenrec).